The following is a 450-amino-acid chain: Benzene 1,2-dioxygenase subunit alpha (450 aa).

A Rieske domain is found at 56–163 (LLGHETHIRK…VETYKGLIFA (108 aa)). 4 residues coordinate [2Fe-2S] cluster: cysteine 96, histidine 98, cysteine 116, and histidine 119. Fe cation-binding residues include histidine 222 and histidine 228.

This sequence belongs to the bacterial ring-hydroxylating dioxygenase alpha subunit family. In terms of assembly, this dioxygenase system consists of four proteins: the two subunits of the hydroxylase component (BedC1 and BedC2), a ferredoxin (BedB) and a ferredoxin reductase (BedA). Requires [2Fe-2S] cluster as cofactor. It depends on Fe cation as a cofactor.

It catalyses the reaction benzene + NADH + O2 + H(+) = cis-1,2-dihydrobenzene-1,2-diol + NAD(+). It functions in the pathway aromatic compound metabolism; benzene degradation; catechol from benzene: step 1/2. This Pseudomonas putida (Arthrobacter siderocapsulatus) protein is Benzene 1,2-dioxygenase subunit alpha (bedC1).